Consider the following 373-residue polypeptide: uncharacterized protein (373 aa).

This is an uncharacterized protein from Methanocaldococcus jannaschii (strain ATCC 43067 / DSM 2661 / JAL-1 / JCM 10045 / NBRC 100440) (Methanococcus jannaschii).